Here is a 450-residue protein sequence, read N- to C-terminus: Phosphoglucosamine mutase (450 aa).

Catalysis depends on Ser-101, which acts as the Phosphoserine intermediate. Residues Ser-101, Asp-241, Asp-243, and Asp-245 each contribute to the Mg(2+) site. Ser-101 bears the Phosphoserine mark.

The protein belongs to the phosphohexose mutase family. The cofactor is Mg(2+). In terms of processing, activated by phosphorylation.

The enzyme catalyses alpha-D-glucosamine 1-phosphate = D-glucosamine 6-phosphate. Catalyzes the conversion of glucosamine-6-phosphate to glucosamine-1-phosphate. The chain is Phosphoglucosamine mutase from Listeria monocytogenes serotype 4b (strain F2365).